The primary structure comprises 263 residues: Mediator of RNA polymerase II transcription subunit 4 (263 aa).

A coiled-coil region spans residues 61-111; sequence LQLAAEQAGIEKNMDALREQVRKQDEEINQLQRQLKEAEQILATSIFQARQ. 2 disordered regions span residues 209–228 and 235–263; these read APNQ…MGAG and DTRA…SDSQ. Residues 251–263 are compositionally biased toward low complexity; sequence STESSSSSSSDSQ.

This sequence belongs to the Mediator complex subunit 4 family. Component of the Mediator complex.

It is found in the nucleus. In terms of biological role, component of the Mediator complex, a coactivator involved in the regulated transcription of nearly all RNA polymerase II-dependent genes. Mediator functions as a bridge to convey information from gene-specific regulatory proteins to the basal RNA polymerase II transcription machinery. Mediator is recruited to promoters by direct interactions with regulatory proteins and serves as a scaffold for the assembly of a functional preinitiation complex with RNA polymerase II and the general transcription factors. The sequence is that of Mediator of RNA polymerase II transcription subunit 4 (MED4) from Anopheles gambiae (African malaria mosquito).